Reading from the N-terminus, the 132-residue chain is Small ribosomal subunit protein uS9 (132 aa).

Belongs to the universal ribosomal protein uS9 family.

The chain is Small ribosomal subunit protein uS9 (rpsI) from Mycoplasma pneumoniae (strain ATCC 29342 / M129 / Subtype 1) (Mycoplasmoides pneumoniae).